We begin with the raw amino-acid sequence, 172 residues long: Myosin regulatory light polypeptide 9 (172 aa).

A compositionally biased stretch (basic residues) spans Met1–Gln16. The interval Met1–Ser20 is disordered. Ser2 is modified (N-acetylserine). Residue Thr19 is modified to Phosphothreonine; by MLCK, CIT and ROCK2. Phosphoserine; by CDC42BP, CIT, MLCK, PAK1, ROCK1, ROCK2, DAPK1, DAPK2 and ZIPK/DAPK3 is present on Ser20. EF-hand domains are found at residues Ser29–Asn64, Asp98–Arg133, and Phe134–Asp169. Ca(2+) contacts are provided by Asp42, Asn44, Asp46, and Asp53.

In terms of assembly, myosin is a hexamer of 2 heavy chains and 4 light chains: interacts with myosin heavy chain MYO19. Interacts with LUZP1; the interaction results in inhibition of phosphorylation of MYL9 by DAPK3. Phosphorylation increases the actin-activated myosin ATPase activity and thereby regulates the contractile activity. It is required to generate the driving force in the migration of the cells but not necessary for localization of myosin-2 at the leading edge. Phosphorylation is required for myotube formation. Phosphorylated by DAPK3; DAPK3-mediated phosphorylation is inhibited by LUZP1.

The protein localises to the cytoplasm. The protein resides in the cytoskeleton. It is found in the cell cortex. Myosin regulatory subunit that plays an important role in regulation of both smooth muscle and nonmuscle cell contractile activity via its phosphorylation. Implicated in cytokinesis, receptor capping, and cell locomotion. In myoblasts, may regulate PIEZO1-dependent cortical actomyosin assembly involved in myotube formation. In Bos taurus (Bovine), this protein is Myosin regulatory light polypeptide 9 (MYL9).